The following is a 53-amino-acid chain: Putative defensin-like protein 53 (53 aa).

Disulfide bonds link C12/C51, C16/C40, C26/C49, and C30/C50.

Belongs to the DEFL family.

This Arabidopsis thaliana (Mouse-ear cress) protein is Putative defensin-like protein 53.